Reading from the N-terminus, the 188-residue chain is Ribosome maturation factor RimM (188 aa).

The 74-residue stretch at 93–166 (EDEYYDHQLI…RAVIDPPPGL (74 aa)) folds into the PRC barrel domain.

This sequence belongs to the RimM family. In terms of assembly, binds ribosomal protein uS19.

It localises to the cytoplasm. An accessory protein needed during the final step in the assembly of 30S ribosomal subunit, possibly for assembly of the head region. Essential for efficient processing of 16S rRNA. May be needed both before and after RbfA during the maturation of 16S rRNA. It has affinity for free ribosomal 30S subunits but not for 70S ribosomes. This Streptomyces coelicolor (strain ATCC BAA-471 / A3(2) / M145) protein is Ribosome maturation factor RimM.